A 714-amino-acid polypeptide reads, in one-letter code: Polyribonucleotide nucleotidyltransferase (714 aa).

Asp-489 and Asp-495 together coordinate Mg(2+). Residues 556-615 (PKIDTIKIDVDKIKVVIGKGGETIDKIIAETGVKIDIDEEGNVSIYSSDQDAINRAKEII) enclose the KH domain. The region spanning 625 to 693 (GEVYHAKVVR…DKGRIDASMK (69 aa)) is the S1 motif domain. Residues 691 to 714 (SMKALVPRPPKPEKSEAKKEGKHD) are disordered. Residues 700 to 714 (PKPEKSEAKKEGKHD) are compositionally biased toward basic and acidic residues.

This sequence belongs to the polyribonucleotide nucleotidyltransferase family. Mg(2+) is required as a cofactor.

It localises to the cytoplasm. The catalysed reaction is RNA(n+1) + phosphate = RNA(n) + a ribonucleoside 5'-diphosphate. In terms of biological role, involved in mRNA degradation. Catalyzes the phosphorolysis of single-stranded polyribonucleotides processively in the 3'- to 5'-direction. The sequence is that of Polyribonucleotide nucleotidyltransferase from Streptococcus equi subsp. equi (strain 4047).